The following is a 235-amino-acid chain: tRNA (guanine-N(1)-)-methyltransferase (235 aa).

Residues Gly112 and 132-137 (IGDYVI) each bind S-adenosyl-L-methionine.

The protein belongs to the RNA methyltransferase TrmD family. Homodimer.

It localises to the cytoplasm. It carries out the reaction guanosine(37) in tRNA + S-adenosyl-L-methionine = N(1)-methylguanosine(37) in tRNA + S-adenosyl-L-homocysteine + H(+). Specifically methylates guanosine-37 in various tRNAs. The protein is tRNA (guanine-N(1)-)-methyltransferase of Anaplasma marginale (strain St. Maries).